Consider the following 273-residue polypeptide: Undecaprenyl-diphosphatase (273 aa).

8 helical membrane passes run 13–35, 45–62, 82–102, 108–128, 144–164, 186–206, 219–239, and 250–270; these read GLVE…VFGN, VFEI…VFEY, FVLN…LFGK, LFNP…ILWV, ALRP…LIPG, TEFS…YDVL, LILI…KALL, and FAYY…SGWI.

It belongs to the UppP family.

Its subcellular location is the cell inner membrane. The enzyme catalyses di-trans,octa-cis-undecaprenyl diphosphate + H2O = di-trans,octa-cis-undecaprenyl phosphate + phosphate + H(+). Catalyzes the dephosphorylation of undecaprenyl diphosphate (UPP). Confers resistance to bacitracin. The sequence is that of Undecaprenyl-diphosphatase from Neisseria meningitidis serogroup C (strain 053442).